Consider the following 189-residue polypeptide: Probable nicotinate-nucleotide adenylyltransferase (189 aa).

This sequence belongs to the NadD family.

It carries out the reaction nicotinate beta-D-ribonucleotide + ATP + H(+) = deamido-NAD(+) + diphosphate. Its pathway is cofactor biosynthesis; NAD(+) biosynthesis; deamido-NAD(+) from nicotinate D-ribonucleotide: step 1/1. In terms of biological role, catalyzes the reversible adenylation of nicotinate mononucleotide (NaMN) to nicotinic acid adenine dinucleotide (NaAD). The protein is Probable nicotinate-nucleotide adenylyltransferase of Bacillus cereus (strain B4264).